Consider the following 305-residue polypeptide: Ribonuclease BN (305 aa).

Residues His64, His66, Asp68, His69, His141, Asp212, and His270 each coordinate Zn(2+). Asp68 acts as the Proton acceptor in catalysis.

Belongs to the RNase Z family. RNase BN subfamily. In terms of assembly, homodimer. Zn(2+) serves as cofactor.

Zinc phosphodiesterase, which has both exoribonuclease and endoribonuclease activities. The protein is Ribonuclease BN of Escherichia coli O139:H28 (strain E24377A / ETEC).